We begin with the raw amino-acid sequence, 374 residues long: Phosphomevalonate kinase (374 aa).

This sequence belongs to the GHMP kinase family. In terms of assembly, homodimer. Mg(2+) serves as cofactor.

The catalysed reaction is (R)-5-phosphomevalonate + ATP = (R)-5-diphosphomevalonate + ADP. It participates in isoprenoid biosynthesis; isopentenyl diphosphate biosynthesis via mevalonate pathway; isopentenyl diphosphate from (R)-mevalonate: step 2/3. Catalyzes the phosphorylation of (R)-mevalonate 5-phosphate (MVAP) to (R)-mevalonate 5-diphosphate (MVAPP). Functions in the mevalonate (MVA) pathway leading to isopentenyl diphosphate (IPP), a key precursor for the biosynthesis of isoprenoid compounds. This Streptomyces sp. (strain CL190) protein is Phosphomevalonate kinase.